Consider the following 800-residue polypeptide: Endoglucanase (800 aa).

The first 30 residues, 1 to 30 (MMLRKKTKQLISSILILVLLLSLFPTALAA), serve as a signal peptide directing secretion. Catalysis depends on glutamate 190, which acts as the Proton donor. The active-site Nucleophile is the glutamate 305. The interval 761–800 (AATTEPVEPEPVDPGEETPPVDEKEAKTEQKEAEKEEKEE) is disordered. Acidic residues predominate over residues 767–780 (VEPEPVDPGEETPP). Residues 781–800 (VDEKEAKTEQKEAEKEEKEE) show a composition bias toward basic and acidic residues.

The protein belongs to the glycosyl hydrolase 5 (cellulase A) family.

It carries out the reaction Endohydrolysis of (1-&gt;4)-beta-D-glucosidic linkages in cellulose, lichenin and cereal beta-D-glucans.. The polypeptide is Endoglucanase (Halalkalibacter akibai (strain ATCC 43226 / DSM 21942 / CIP 109018 / JCM 9157 / 1139) (Bacillus akibai)).